We begin with the raw amino-acid sequence, 649 residues long: Pesticidal crystal protein Cry3Ca (649 aa).

The segment covering 1-13 has biased composition (basic and acidic residues); sequence MNPNNRSEHDTIK. Residues 1–29 form a disordered region; it reads MNPNNRSEHDTIKATENNEVSNNHAQYPL. The segment covering 14 to 25 has biased composition (polar residues); the sequence is ATENNEVSNNHA.

The protein belongs to the delta endotoxin family.

Functionally, promotes colloidosmotic lysis by binding to the midgut epithelial cells of Coleoptera. The sequence is that of Pesticidal crystal protein Cry3Ca (cry3Ca) from Bacillus thuringiensis subsp. kurstaki.